Reading from the N-terminus, the 203-residue chain is Thymidylate kinase (203 aa).

10 to 17 serves as a coordination point for ATP; it reads GIDGAGKS.

It belongs to the thymidylate kinase family.

The catalysed reaction is dTMP + ATP = dTDP + ADP. In terms of biological role, phosphorylation of dTMP to form dTDP in both de novo and salvage pathways of dTTP synthesis. The sequence is that of Thymidylate kinase from Cupriavidus pinatubonensis (strain JMP 134 / LMG 1197) (Cupriavidus necator (strain JMP 134)).